We begin with the raw amino-acid sequence, 585 residues long: Putative phospholipase B-like 2 (585 aa).

Positions M1 to A35 are cleaved as a signal peptide. N-linked (GlcNAc...) asparagine glycans are attached at residues N84, N102, and N106. A disulfide bond links C138 and C148. N-linked (GlcNAc...) asparagine glycosylation is found at N227 and N432. A disulfide bond links C488 and C491. N511 is a glycosylation site (N-linked (GlcNAc...) asparagine).

It belongs to the phospholipase B-like family. Interacts with IGF2R. Post-translationally, glycosylated; contains mannose 6-phosphate sugars.

The protein localises to the lysosome lumen. Functionally, putative phospholipase. This is Putative phospholipase B-like 2 (Plbd2) from Rattus norvegicus (Rat).